Reading from the N-terminus, the 295-residue chain is Non-selective voltage-gated ion channel VDAC2 (295 aa).

Residues lysine 24 and lysine 32 each coordinate ATP. The residue at position 32 (lysine 32) is an N6-acetyllysine; alternate. At lysine 32 the chain carries N6-succinyllysine; alternate. Residue lysine 32 forms a Glycyl lysine isopeptide (Lys-Gly) (interchain with G-Cter in ubiquitin); alternate linkage. A run of 2 beta stranded transmembrane segments spans residues 38–47 and 51–59; these read LVKLDVKTKS and VEFSTSGSS. Glycyl lysine isopeptide (Lys-Gly) (interchain with G-Cter in ubiquitin) cross-links involve residues lysine 65 and lysine 73. 4 consecutive transmembrane segments (beta stranded) span residues 66 to 76, 81 to 88, 92 to 101, and 107 to 116; these read VSGTLETKYKW, LTFTEKWN, TLGTEIAIED, and LKLTFDTTFS. N6-acetyllysine; alternate is present on lysine 121. Lysine 121 participates in a covalent cross-link: Glycyl lysine isopeptide (Lys-Gly) (interchain with G-Cter in ubiquitin); alternate. Glycyl lysine isopeptide (Lys-Gly) (interchain with G-Cter in ubiquitin) cross-links involve residues lysine 122 and lysine 125. The next 4 beta stranded transmembrane spans lie at 123-132, 135-142, 149-157, and 162-170; these read SGKIKSAYKR, INLGCDVD, AIHGSAVFG, and LAGYQMTFD. A Glycyl lysine isopeptide (Lys-Gly) (interchain with G-Cter in ubiquitin) cross-link involves residue lysine 173. Transmembrane regions (beta stranded) follow at residues 175 to 187, 190 to 197, 201 to 210, 214 to 223, 230 to 239, and 243 to 250; these read KLTR…GYRT, FQLHTNVN, EFGGSIYQKV, FDTSVNLAWT, RFGIAAKYQL, and ASISAKVN. Serine 205 carries the post-translational modification Phosphoserine. The residue at position 252 (serine 252) is a Phosphoserine. Residues 254–256 and 272–276 contribute to the NAD(+) site; these read LIG and SALVD. Beta stranded transmembrane passes span 254-263 and 266-275; these read LIGVGYTQTL and GVKLTLSALV. Residue lysine 278 is modified to N6-acetyllysine; alternate. Lysine 278 is covalently cross-linked (Glycyl lysine isopeptide (Lys-Gly) (interchain with G-Cter in ubiquitin); alternate). A beta stranded membrane pass occupies residues 285 to 294; it reads HKLGLALELE. Residue lysine 286 forms a Glycyl lysine isopeptide (Lys-Gly) (interchain with G-Cter in ubiquitin) linkage.

The protein belongs to the eukaryotic mitochondrial porin family. Monomer, homodimer and higher order oligomers; formation of higher order structures is necessary for scramblase activity. Interacts with ARMC12 in a TBC1D21-dependent manner. Interacts with KLC3. Interacts with SPATA33. Interacts with PPP3CC in a SPATA33-dependent manner. Post-translationally, ubiquitinated by PRKN during mitophagy, leading to its degradation and enhancement of mitophagy. Deubiquitinated by USP30.

It localises to the mitochondrion outer membrane. The protein localises to the membrane. The catalysed reaction is chloride(in) = chloride(out). It catalyses the reaction K(+)(in) = K(+)(out). The enzyme catalyses a 1,2-diacyl-sn-glycero-3-phospho-L-serine(in) = a 1,2-diacyl-sn-glycero-3-phospho-L-serine(out). It carries out the reaction a 1,2-diacyl-sn-glycero-3-phosphocholine(in) = a 1,2-diacyl-sn-glycero-3-phosphocholine(out). The catalysed reaction is a 1,2-diacyl-sn-glycero-3-phospho-(1D-myo-inositol)(in) = a 1,2-diacyl-sn-glycero-3-phospho-(1D-myo-inositol)(out). In terms of biological role, non-selective voltage-gated ion channel that mediates the transport of anions and cations through the mitochondrion outer membrane and plasma membrane. The channel adopts an open conformation at zero mV and a closed conformation at both positive and negative potentials. There are two populations of channels; the main that functions in a lower open-state conductance with lower ion selectivity, that switch, in a voltage-dependent manner, from the open to a low-conducting 'closed' state and the other that has a normal ion selectivity in the typical high conductance, 'open' state. Binds various lipids, including the sphingolipid ceramide, the phospholipid phosphatidylcholine, and the sterols cholesterol and oxysterol. Binding of ceramide promotes the mitochondrial outer membrane permeabilization (MOMP) apoptotic pathway. Catalyzes the scrambling of phospholipids across the outer mitochondrial membrane; the mechanism is unrelated to channel activity and is capable of translocating both anionic and zwitterionic phospholipids. The sequence is that of Non-selective voltage-gated ion channel VDAC2 from Mesocricetus auratus (Golden hamster).